The primary structure comprises 227 residues: General transcription factor 3C polypeptide 6 (227 aa).

Positions 157 to 227 are disordered; sequence DEAAGPASDK…DGNVSQNNQS (71 aa). The span at 186–195 shows a compositional bias: basic and acidic residues; the sequence is EQEKVEHSEV. Residues 203–227 show a composition bias toward polar residues; that stretch reads ETPSEMESSVFMGTQDGNVSQNNQS.

The protein belongs to the TFIIIC subunit 6 family. As to quaternary structure, part of the TFIIIC subcomplex TFIIIC2, consisting of six subunits, GTF3C1, GTF3C2, GTF3C3, GTF3C4, GTF3C5 and GTF3C6. Interacts with GTF3C4 and GTF3C5.

It localises to the nucleus. Involved in RNA polymerase III-mediated transcription. Integral, tightly associated component of the DNA-binding TFIIIC2 subcomplex that directly binds tRNA and virus-associated RNA promoters. This chain is General transcription factor 3C polypeptide 6, found in Mus musculus (Mouse).